The sequence spans 640 residues: Leucine-rich repeat-containing protein 4C (640 aa).

The N-terminal stretch at 1-44 (MLNKMTLHPQQIMIGPRFNRALFDPLLVVLLALQLLVVAGLVRA) is a signal peptide. The 32-residue stretch at 45 to 76 (QTCPSVCSCSNQFSKVICVRKNLREVPDGIST) folds into the LRRNT domain. LRR repeat units follow at residues 77–98 (NTRL…SFKH), 101–122 (HLEI…AFNG), 125–146 (NLNT…AFVY), 149–170 (KLKE…AFNR), 173–195 (SLRR…AFEG), 198–219 (NLRY…TPLI), 220–241 (KLDE…SFQG), 244–265 (HLQK…AFDN), and 268–289 (SLVE…LFTP). The LRRCT domain occupies 301 to 353 (NPWNCNCDILWLSWWIKDMAPSNTACCARCNTPPNLKGRYIGELDQNYFTCYA). The Ig-like C2-type domain maps to 354–442 (PVIVEPPADL…GNTTASATLN (89 aa)). An intrachain disulfide couples Cys375 to Cys426. Residues 463–483 (EPSQDEARTTDNNVGPTPVVD) are disordered. The helical transmembrane segment at 528-548 (IIIGCFVAITLMAAVMLVIFY) threads the bilayer. A Phosphoserine modification is found at Ser631.

In terms of assembly, interacts with NTNG1 and WHRN. Highly expressed in the cerebral cortex, including frontal, parietal and occipital lobes. Putamen, amygdala, hippocampus and medulla oblongata show moderate expression. Caudate nucleus and thalamus express small amounts, whereas other brain regions show very weak or no expression.

The protein localises to the postsynaptic cell membrane. Functionally, may promote neurite outgrowth of developing thalamic neurons. The chain is Leucine-rich repeat-containing protein 4C (LRRC4C) from Homo sapiens (Human).